We begin with the raw amino-acid sequence, 147 residues long: MASRRLLLLCLAGLVLVTEAGPTGTGQSKCPLMVKVLDAVQGSPAVNVAVRVFKKAADETWEPFASGKTSEFGELHGLTTDEKFVEGIIKVELDTKTYWKALGISPFHEYVEVVFHANDSGKRRYTIAALLSPYSYSTTALVSDPKE.

A signal peptide spans 1–20; it reads MASRRLLLLCLAGLVLVTEA. At Cys30 the chain carries Sulfocysteine. An L-thyroxine-binding site is contributed by Lys35. At Glu62 the chain carries 4-carboxyglutamate. Position 74 (Glu74) interacts with L-thyroxine. Asn118 is a glycosylation site (N-linked (GlcNAc...) asparagine). An L-thyroxine-binding site is contributed by Ser137.

Belongs to the transthyretin family. Homotetramer. Dimer of dimers. In the homotetramer, subunits assemble around a central channel that can accommodate two ligand molecules. Interacts with RBP4. Sulfonation of the reactive cysteine Cys-30 enhances the stability of the native conformation of TTR, avoiding misassembly of the protein leading to amyloid formation. In terms of tissue distribution, detected in serum (at protein level). Detected in liver.

The protein resides in the secreted. Functionally, thyroid hormone-binding protein. Probably transports thyroxine from the bloodstream to the brain. The chain is Transthyretin (TTR) from Sorex araneus (Eurasian common shrew).